A 502-amino-acid polypeptide reads, in one-letter code: MMDLISNLSLGFETALTPVNIVWCFVGVLLGTLVGVLPGIGPTATIAMLLPITFTFSPVTSLIMLSGIYYGAQYGGSTTAILINLPGESSSAVTAIDGYQMARKGRAGQALATAALGSFFAGCVATLLLAIAAPPLASVALKFGAPEYFALIVLGLLVSISLAHGSVLKALGMIVVGLLLGTVGQDIYTGQERFTFGQMELTEGINFVSIAVGVFGVAEIFRNLQDESDREVGVKRVMNLWLSKEDFRRITGPVIRGTILGSILGVLPGGGHVLASFASYSAEKNLSKHPEEFGHGAIEGVAGPESANNAAAQTSFIPLLTLGIPAHPVMALIVGAFILQGITPGPDVINSQPALFWGIIASMWIGNLLLVILNLPLIGLWVKMLTIPYRMLFPAIVVFAAIGCYSINSNPFDVYAIIVAGILGFLLIRMGCEPAPLLLGFVLGPLLEEHLRRAMIISRGDAMVFVTNPIAASLLAVGLACVVIALLPSIRSKRDKVFVEED.

This is an uncharacterized protein from Agrobacterium vitis (Rhizobium vitis).